Reading from the N-terminus, the 250-residue chain is 2,3-bisphosphoglycerate-dependent phosphoglycerate mutase (250 aa).

Substrate-binding positions include 10–17, 23–24, R62, 89–92, K100, 116–117, and 185–186; these read RHGESVWN, TG, ERHY, RR, and GN. H11 serves as the catalytic Tele-phosphohistidine intermediate. E89 acts as the Proton donor/acceptor in catalysis.

The protein belongs to the phosphoglycerate mutase family. BPG-dependent PGAM subfamily. In terms of assembly, homodimer.

The enzyme catalyses (2R)-2-phosphoglycerate = (2R)-3-phosphoglycerate. It participates in carbohydrate degradation; glycolysis; pyruvate from D-glyceraldehyde 3-phosphate: step 3/5. Functionally, catalyzes the interconversion of 2-phosphoglycerate and 3-phosphoglycerate. The sequence is that of 2,3-bisphosphoglycerate-dependent phosphoglycerate mutase from Proteus mirabilis (strain HI4320).